We begin with the raw amino-acid sequence, 864 residues long: N-alpha-acetyltransferase 16, NatA auxiliary subunit (864 aa).

TPR repeat units lie at residues 46–79, 80–113, 148–184, 224–257, 374–407, 408–441, and 485–514; these read GETLAMKGLILNCLGKREEAYEFVRKGLRSDVRS, HVCWHVYGLLQRSDKKYDEAIKCYRNALKLDKDN, RASWIGYAIAYHLLKDYDTALKLLEEFRQTQQVPPNK, LLVEEIKGEMLLKLGRLKEASEVFRNLIDWNAEN, IWVQYFLAQHYDKLGQYFLALEYINAVIASTPTL, IELFYMKAKIYKHMGNLKEAAQWMDEAQSLDTAD, and MWFETECISAYQRLGRYGDALKKCHEVERH. The interval 594–646 is disordered; the sequence is KMLSKQRRAQKKAKVEEERKHTERERQQKNQKKKREEEEEVTSGHKEELIPEK. The segment covering 595–605 has biased composition (basic residues); that stretch reads MLSKQRRAQKK. Basic and acidic residues-rich tracts occupy residues 606-621 and 635-646; these read AKVEEERKHTERERQQ and TSGHKEELIPEK.

In terms of assembly, component of the N-terminal acetyltransferase A (NatA) complex composed of NAA10 and NAA16. As to expression, highest levels in the kidney and testes. Moderate expression in the liver, thymus and skin.

Its function is as follows. Auxillary subunit of the N-terminal acetyltransferase A (NatA) complex which displays alpha (N-terminal) acetyltransferase activity. The polypeptide is N-alpha-acetyltransferase 16, NatA auxiliary subunit (Naa16) (Mus musculus (Mouse)).